The following is an 863-amino-acid chain: DNA mismatch repair protein MutS (863 aa).

Residue 607–614 (GPNMAGKS) participates in ATP binding.

It belongs to the DNA mismatch repair MutS family.

This protein is involved in the repair of mismatches in DNA. It is possible that it carries out the mismatch recognition step. This protein has a weak ATPase activity. The polypeptide is DNA mismatch repair protein MutS (Caldicellulosiruptor saccharolyticus (strain ATCC 43494 / DSM 8903 / Tp8T 6331)).